The sequence spans 415 residues: MGDDGPGSTVHLLCLAASSGVPLFCRSSSGGAPSRQQLPFSVIGSLNGVHMFGQNLDVQLNSARTEDTTVVWKNFHDSITLIALSSEEGTSELKLERMLHMVFGAMVLIVGLEELTNIRNVERLKKELRASYCLIDSFLGNSELIGDLTQCVDCVIPPEGSVMQETLSGFAEATGTAFVSLLVSGRVVAATDGWWRLGMPEAVLLPWLVGSLPPQAARDYPVYLPHGSPTVPHRLLTLTLLRGLELCLLCGPRPPLGELDPQLLERWWQPLLEPLRACLPLGPRALPDGFPLHSDILGLLLLHLELRRCLFTVEPSKDKEPSPEQRRRLLRNFYTLVATTHFPPEPGPAEKQEDTVHPAQTPRACYLVLGPGMGWQLVAVQLGLRLLLLMLSPQTPTHGLRSLATHTLQALTPLL.

The protein belongs to the fuzzy family. Component of the CPLANE (ciliogenesis and planar polarity effectors) complex, composed of INTU, FUZ and WDPCP. Interacts with CPLANE1 and CPLANE2.

It is found in the cytoplasm. The protein resides in the cytoskeleton. The protein localises to the cilium basal body. Functionally, probable planar cell polarity effector involved in cilium biogenesis. Proposed to function as core component of the CPLANE (ciliogenesis and planar polarity effectors) complex involved in the recruitment of peripheral IFT-A proteins to basal bodies. May regulate protein and membrane transport to the cilium. May regulate the morphogenesis of hair follicles which depends on functional primary cilia. Binds phosphatidylinositol 3-phosphate with highest affinity, followed by phosphatidylinositol 4-phosphate and phosphatidylinositol 5-phosphate. The polypeptide is Protein fuzzy homolog (Fuz) (Rattus norvegicus (Rat)).